The sequence spans 415 residues: DNA polymerase IV (415 aa).

In terms of domain architecture, UmuC spans 15–196 (ILHVDMNCFF…LPVGAMHGIG (182 aa)). Asp-19 and Asp-115 together coordinate Mg(2+). Glu-116 is an active-site residue. The disordered stretch occupies residues 238–260 (KGMDDRQVDPSQMGQHKSVGNSM). Residues 246 to 260 (DPSQMGQHKSVGNSM) show a composition bias toward polar residues.

Belongs to the DNA polymerase type-Y family. As to quaternary structure, monomer. The cofactor is Mg(2+).

The protein resides in the cytoplasm. The enzyme catalyses DNA(n) + a 2'-deoxyribonucleoside 5'-triphosphate = DNA(n+1) + diphosphate. Functionally, poorly processive, error-prone DNA polymerase involved in untargeted mutagenesis. Copies undamaged DNA at stalled replication forks, which arise in vivo from mismatched or misaligned primer ends. These misaligned primers can be extended by PolIV. Exhibits no 3'-5' exonuclease (proofreading) activity. May be involved in translesional synthesis, in conjunction with the beta clamp from PolIII. The protein is DNA polymerase IV of Bacillus cereus (strain ZK / E33L).